A 359-amino-acid polypeptide reads, in one-letter code: Peptide chain release factor 1 (359 aa).

The residue at position 234 (Gln234) is an N5-methylglutamine.

Belongs to the prokaryotic/mitochondrial release factor family. In terms of processing, methylated by PrmC. Methylation increases the termination efficiency of RF1.

It is found in the cytoplasm. In terms of biological role, peptide chain release factor 1 directs the termination of translation in response to the peptide chain termination codons UAG and UAA. The sequence is that of Peptide chain release factor 1 from Clavibacter michiganensis subsp. michiganensis (strain NCPPB 382).